We begin with the raw amino-acid sequence, 600 residues long: Malto-oligosyltrehalose trehalohydrolase (600 aa).

Positions 1–34 (MTQTQPVTPTPPASFQTQHDPRTRLGATPLPGGA) are disordered. 273–278 (RLDATP) serves as a coordination point for substrate. Asp275 acts as the Nucleophile in catalysis. Catalysis depends on Glu308, which acts as the Proton donor. Residues 328–332 (DDFHH), Glu376, and 399–404 (HDQIGN) contribute to the substrate site.

Belongs to the glycosyl hydrolase 13 family. As to quaternary structure, monomer.

The protein resides in the cytoplasm. The catalysed reaction is hydrolysis of (1-&gt;4)-alpha-D-glucosidic linkage in 4-alpha-D-[(1-&gt;4)-alpha-D-glucanosyl]n trehalose to yield trehalose and (1-&gt;4)-alpha-D-glucan.. Its pathway is glycan biosynthesis; trehalose biosynthesis. In Deinococcus radiodurans (strain ATCC 13939 / DSM 20539 / JCM 16871 / CCUG 27074 / LMG 4051 / NBRC 15346 / NCIMB 9279 / VKM B-1422 / R1), this protein is Malto-oligosyltrehalose trehalohydrolase (treZ).